A 933-amino-acid polypeptide reads, in one-letter code: C-1-tetrahydrofolate synthase, cytoplasmic (933 aa).

A methylenetetrahydrofolate dehydrogenase and cyclohydrolase region spans residues 1–303; that stretch reads MWEPQGSLDP…DRLLAPTWPL (303 aa). Residues 51-55 and 98-100 contribute to the substrate site; these read YIRMK and VQM. Residues 170–172 and S195 each bind NADP(+); that span reads GRS. Position 270-274 (270-274) interacts with substrate; the sequence is PGGVG. The formyltetrahydrofolate synthetase stretch occupies residues 304 to 933; the sequence is RPLRITPLSP…TKTGEIEGLF (630 aa). Position 378-385 (378-385) interacts with ATP; it reads TPLGEGKS.

In the N-terminal section; belongs to the tetrahydrofolate dehydrogenase/cyclohydrolase family. The protein in the C-terminal section; belongs to the formate--tetrahydrofolate ligase family. Homodimer.

The protein localises to the cytoplasm. The catalysed reaction is (6R)-5,10-methylene-5,6,7,8-tetrahydrofolate + NADP(+) = (6R)-5,10-methenyltetrahydrofolate + NADPH. It carries out the reaction (6R)-5,10-methenyltetrahydrofolate + H2O = (6R)-10-formyltetrahydrofolate + H(+). It catalyses the reaction (6S)-5,6,7,8-tetrahydrofolate + formate + ATP = (6R)-10-formyltetrahydrofolate + ADP + phosphate. Its pathway is one-carbon metabolism; tetrahydrofolate interconversion. In Spodoptera frugiperda (Fall armyworm), this protein is C-1-tetrahydrofolate synthase, cytoplasmic.